The chain runs to 349 residues: Protein Wnt-7b (349 aa).

An N-terminal signal peptide occupies residues 1–24; it reads MHRNFRKWIFYVFLCFGVLYVKLG. Intrachain disulfides connect cysteine 73–cysteine 84, cysteine 123–cysteine 131, cysteine 133–cysteine 152, cysteine 200–cysteine 214, and cysteine 202–cysteine 209. N-linked (GlcNAc...) asparagine glycosylation is found at asparagine 83 and asparagine 127. Serine 206 is lipidated: O-palmitoleoyl serine; by PORCN. Residues 238–266 are disordered linker; that stretch reads VEVVRASRLRQPTFLRIKQLRSYQKPMET. Intrachain disulfides connect cysteine 278–cysteine 309, cysteine 294–cysteine 304, cysteine 308–cysteine 348, cysteine 324–cysteine 339, cysteine 326–cysteine 336, and cysteine 331–cysteine 332. N-linked (GlcNAc...) asparagine glycosylation occurs at asparagine 295.

It belongs to the Wnt family. Forms a soluble 1:1 complex with AFM; this prevents oligomerization and is required for prolonged biological activity. The complex with AFM may represent the physiological form in body fluids. Interacts with FZD1 and FZD10. Interacts with FZD4 (in vitro). Interacts with PORCN. Interacts with glypican GPC3. Interacts (via intrinsically disordered linker region) with RECK; interaction with RECK confers ligand selectivity for Wnt7 in brain endothelial cells and allows these cells to selectively respond to Wnt7. Post-translationally, palmitoleoylation is required for efficient binding to frizzled receptors. Depalmitoleoylation leads to Wnt signaling pathway inhibition.

It localises to the secreted. The protein localises to the extracellular space. Its subcellular location is the extracellular matrix. In terms of biological role, ligand for members of the frizzled family of seven transmembrane receptors that functions in the canonical Wnt/beta-catenin signaling pathway. Required for normal fusion of the chorion and the allantois during placenta development. Required for central nervous system (CNS) angiogenesis and blood-brain barrier regulation. In Mus musculus (Mouse), this protein is Protein Wnt-7b (Wnt7b).